A 214-amino-acid polypeptide reads, in one-letter code: MIASLSGTVEHVALDRAVIAVGGLGVQFSATPQTLSTLHEGRPGAVQTHLVVKEDALTLYGFADRDEREVFEVLITANGVGPRLALAILSVHHPETVRRAVTEEDEKTLTRVPGIGPKMARKIIVELSGRLAPTGEPVPGAEAEASDEPAVETVWHADVVQAMAGLGWSEKEALKAVEATVAARPELDEGRDVAALLRATLRDVGMAGAVRGGR.

Residues 1–63 (MIASLSGTVE…EDALTLYGFA (63 aa)) form a domain I region. Residues 64-142 (DRDEREVFEV…PTGEPVPGAE (79 aa)) are domain II. The flexible linker stretch occupies residues 143–151 (AEASDEPAV). Residues 151 to 214 (VETVWHADVV…GMAGAVRGGR (64 aa)) are domain III.

Belongs to the RuvA family. Homotetramer. Forms an RuvA(8)-RuvB(12)-Holliday junction (HJ) complex. HJ DNA is sandwiched between 2 RuvA tetramers; dsDNA enters through RuvA and exits via RuvB. An RuvB hexamer assembles on each DNA strand where it exits the tetramer. Each RuvB hexamer is contacted by two RuvA subunits (via domain III) on 2 adjacent RuvB subunits; this complex drives branch migration. In the full resolvosome a probable DNA-RuvA(4)-RuvB(12)-RuvC(2) complex forms which resolves the HJ.

The protein localises to the cytoplasm. In terms of biological role, the RuvA-RuvB-RuvC complex processes Holliday junction (HJ) DNA during genetic recombination and DNA repair, while the RuvA-RuvB complex plays an important role in the rescue of blocked DNA replication forks via replication fork reversal (RFR). RuvA specifically binds to HJ cruciform DNA, conferring on it an open structure. The RuvB hexamer acts as an ATP-dependent pump, pulling dsDNA into and through the RuvAB complex. HJ branch migration allows RuvC to scan DNA until it finds its consensus sequence, where it cleaves and resolves the cruciform DNA. The polypeptide is Holliday junction branch migration complex subunit RuvA (Micrococcus luteus (strain ATCC 4698 / DSM 20030 / JCM 1464 / CCM 169 / CCUG 5858 / IAM 1056 / NBRC 3333 / NCIMB 9278 / NCTC 2665 / VKM Ac-2230) (Micrococcus lysodeikticus)).